Consider the following 461-residue polypeptide: RCC1-like G exchanging factor-like protein (461 aa).

The segment covering 1–10 (MLAAARALRG) has biased composition (low complexity). Residues 1–34 (MLAAARALRGPRPRWPTPAREHWTPAGRSRSRRE) constitute a mitochondrion transit peptide. The segment at 1–35 (MLAAARALRGPRPRWPTPAREHWTPAGRSRSRREA) is disordered. 7 RCC1 repeats span residues 55 to 121 (ADRV…LSSK), 125 to 188 (VTKV…VLTD), 190 to 244 (EGVF…FLTD), 245 to 297 (KGEV…ALSA), 298 to 350 (DGGV…VLNA), 352 to 408 (GHVF…ALTN), and 409 to 458 (KGEL…TLAK).

As to quaternary structure, forms a regulatory protein-RNA complex, consisting of RCC1L, NGRN, RPUSD3, RPUSD4, TRUB2, FASTKD2 and 16S mt-rRNA. Interacts with 16S mt-rRNA; this interaction is direct. Interacts with OPA1; this interaction is direct. At E8.5, broadly expressed in yolk sac placenta, decidua, and embryo, with highest levels found in the trophoblast giant cells (TGCs) and ectoplacental cone (at protein level).

It is found in the mitochondrion inner membrane. In terms of biological role, guanine nucleotide exchange factor (GEF) for mitochondrial dynamin-related GTPase OPA1. Activates OPA1, by exchanging bound GDP for free GTP, and drives OPA1 and MFN1-dependent mitochondrial fusion. Plays an essential role in mitochondrial ribosome biogenesis. As a component of a functional protein-RNA module, consisting of RCC1L, NGRN, RPUSD3, RPUSD4, TRUB2, FASTKD2 and 16S mitochondrial ribosomal RNA (16S mt-rRNA), controls 16S mt-rRNA abundance and is required for intra-mitochondrial translation of core subunits of the oxidative phosphorylation system. The protein is RCC1-like G exchanging factor-like protein of Mus musculus (Mouse).